A 165-amino-acid chain; its full sequence is Large ribosomal subunit protein uL10 (165 aa).

It belongs to the universal ribosomal protein uL10 family. As to quaternary structure, part of the ribosomal stalk of the 50S ribosomal subunit. The N-terminus interacts with L11 and the large rRNA to form the base of the stalk. The C-terminus forms an elongated spine to which L12 dimers bind in a sequential fashion forming a multimeric L10(L12)X complex.

Functionally, forms part of the ribosomal stalk, playing a central role in the interaction of the ribosome with GTP-bound translation factors. In Citrobacter koseri (strain ATCC BAA-895 / CDC 4225-83 / SGSC4696), this protein is Large ribosomal subunit protein uL10.